The primary structure comprises 151 residues: uncharacterized protein (151 aa).

In terms of domain architecture, KilA-N spans 11 to 118 (NFCKLSYEDI…LKVVKFINSY (108 aa)).

This is an uncharacterized protein from Fowlpox virus (strain NVSL) (FPV).